We begin with the raw amino-acid sequence, 505 residues long: COMPASS component BRE2 (505 aa).

The B30.2/SPRY domain occupies 70-295; the sequence is SANPFFTILG…LKQETTNKEF (226 aa). Residue Ser-227 is modified to Phosphoserine. The segment at 271–290 is disordered; that stretch reads EPWREDAENGPSRKKLKQET. Residue Lys-318 coordinates DNA. The disordered stretch occupies residues 398–420; sequence RDESNDKNTTSAKKKKQQQKKKK. Basic residues predominate over residues 409 to 420; that stretch reads AKKKKQQQKKKK.

This sequence belongs to the cclA family. As to quaternary structure, component of the Set1C/COMPASS complex which consists of SET1(2), BRE2(2), SPP1(2), SDC1(1), SHG1(1), SWD1(1), SWD2(1), and SWD3(1). Interacts directly with SDC1.

The protein resides in the nucleus. It localises to the chromosome. The protein localises to the telomere. Functionally, component of the Set1C/COMPASS complex that specifically mono-, di- and trimethylates histone H3 to form H3K4me1/2/3, which subsequently plays a role in telomere length maintenance and transcription elongation regulation. COMPASS recognizes ubiquitinated H2B on one face of the nucleosome which stimulates the methylation of H3 on the opposing face. The protein is COMPASS component BRE2 of Saccharomyces cerevisiae (strain ATCC 204508 / S288c) (Baker's yeast).